The chain runs to 728 residues: MENMAEEELLPQEKEEAQVRVPTPAPDSAPVPAPAADTALDSAPTPDSDPAPALAPAPAPALSPSLASVPEEAESKRHISIQRRLADLEKLAFGTEGDVDSASSLNSDNPGTENSQTCPLCPKEKFRAYSSHKLRRHLQNLHWKISVEFEGYRMCICHLACRPVKPTIVGEQISSKLGAHYHCIICSATITRRTDMLGHVKRHVNKGETKSRYIAASTAKSSNEILKETDTDIQVFPNYSIPQKTDSYFNPKMKLNRQIIFCTLAALAKERKPLECLDAFGATGIMGLQWAKHLGNAVKVTINDLNENSVTLIQKNCHLNKLKVVVDSEEKEEGDALEDDGTLGDIQVTRMDANVLMHLRSFDFIHLDPFGTSVNYLDSAFRNVRNLGIVSVTSTDISSLYAKAQHVARRHYGCNIVRTEYYKELAARIVVAAVARAAARCNKGIEVLFAVALEHFVLVVVRVLRGPTSADETAKKIQYLIHCQWCEERIFQKDGNMVEENPYRQLPCNCHGSMPGKTAIELGPLWSSSLFNTGFLKRMLFESIHHGLDDIQPLIKTLIFESECTPQSQCSTHAPSNTNKQEENGVFVKTTDDTTIDIYSAQGKRKSNEMAINLAKKQKTDASTAHPPFYYNIHRHSIKGMNMPKLKKFLCCLSQAGFRVSRTHFDPMGIRTDAPLMQFKSILLKYSTPTYTGAQSEGQMPPAAEDTVTDRVEMSVSDKAEASGCRRW.

Acidic residues predominate over residues 1–10; that stretch reads MENMAEEELL. Disordered regions lie at residues 1 to 78 and 98 to 118; these read MENM…SKRH and DVDS…SQTC. Thr-23 carries the phosphothreonine modification. Residues 23–33 are compositionally biased toward pro residues; the sequence is TPAPDSAPVPA. Residues 34–46 show a composition bias toward low complexity; that stretch reads PAADTALDSAPTP. Positions 47–61 are enriched in pro residues; sequence DSDPAPALAPAPAPA. Phosphoserine is present on Ser-63. Over residues 101 to 118 the composition is skewed to polar residues; sequence SASSLNSDNPGTENSQTC. The Nucleolar localization signal signature appears at 132-136; the sequence is HKLRR. The C2H2-type zinc-finger motif lies at 181–203; the sequence is YHCIICSATITRRTDMLGHVKRH. In terms of domain architecture, Trm1 methyltransferase spans 224 to 683; sequence EILKETDTDI…APLMQFKSIL (460 aa). S-adenosyl-L-methionine contacts are provided by Arg-257, Asp-304, Asp-352, and Ala-353. Positions 483, 486, 508, and 510 each coordinate Zn(2+). Lys-580 participates in a covalent cross-link: Glycyl lysine isopeptide (Lys-Gly) (interchain with G-Cter in SUMO2). Ser-607 carries the phosphoserine modification. The segment at 693 to 728 is disordered; that stretch reads GAQSEGQMPPAAEDTVTDRVEMSVSDKAEASGCRRW. Basic and acidic residues predominate over residues 708 to 721; the sequence is VTDRVEMSVSDKAE.

It belongs to the class I-like SAM-binding methyltransferase superfamily. Trm1 family. In terms of tissue distribution, expressed in various neuronal structures during embryonic development, including spinal ganglia, trigeminal nerve and ganglion, olfactory and nasopharyngeal epithelium, nuclei of the metencephalon, thalamus and medulla oblongata. Also expressed in lung, esophagus, epiglottis, ependyma, vertebral column, spinal cord and brown adipose tissue. Expression persists in the adult brain with dynamically changing patterns in cortex and cerebellum.

The protein resides in the nucleus. The protein localises to the nucleolus. The enzyme catalyses guanosine(27) in tRNA(Tyr) + 2 S-adenosyl-L-methionine = N(2)-dimethylguanosine(27) in tRNA(Tyr) + 2 S-adenosyl-L-homocysteine + 2 H(+). Functionally, specifically dimethylates a single guanine residue at position 27 of tRNA(Tyr) using S-adenosyl-L-methionine as donor of the methyl groups. Dimethylation at position 27 of tRNA(Tyr) is required for efficient translation of tyrosine codons. Also required to maintain 3-(3-amino-3-carboxypropyl)uridine (acp3U) in the D-loop of several cytoplasmic tRNAs. May play a role in motor coordination and exploratory behavior. This Mus musculus (Mouse) protein is tRNA (guanine(27)-N(2))-dimethyltransferase.